The primary structure comprises 311 residues: Ribosomal RNA small subunit methyltransferase H (311 aa).

S-adenosyl-L-methionine-binding positions include 32 to 34, aspartate 52, phenylalanine 78, aspartate 99, and glutamine 106; that span reads GGH.

It belongs to the methyltransferase superfamily. RsmH family.

The protein localises to the cytoplasm. The enzyme catalyses cytidine(1402) in 16S rRNA + S-adenosyl-L-methionine = N(4)-methylcytidine(1402) in 16S rRNA + S-adenosyl-L-homocysteine + H(+). Its function is as follows. Specifically methylates the N4 position of cytidine in position 1402 (C1402) of 16S rRNA. This chain is Ribosomal RNA small subunit methyltransferase H, found in Halothermothrix orenii (strain H 168 / OCM 544 / DSM 9562).